A 261-amino-acid polypeptide reads, in one-letter code: UPF0328 protein ECU06_0100 (261 aa).

It belongs to the UPF0328 family.

The chain is UPF0328 protein ECU06_0100 from Encephalitozoon cuniculi (strain GB-M1) (Microsporidian parasite).